A 720-amino-acid polypeptide reads, in one-letter code: Neurochondrin (720 aa).

The protein belongs to the neurochondrin family.

The protein localises to the cytoplasm. It localises to the cytosol. It is found in the cell projection. The protein resides in the dendrite. Its subcellular location is the postsynapse. Functionally, probably involved in signal transduction, in the nervous system. Required for the spatial learning process. May also be involved in neurite outgrowth. This chain is Neurochondrin (ncdn), found in Xenopus laevis (African clawed frog).